The primary structure comprises 131 residues: Arsenate reductase (131 aa).

Active-site nucleophile residues include cysteine 10, cysteine 82, and cysteine 89. 2 cysteine pairs are disulfide-bonded: cysteine 10–cysteine 82 and cysteine 82–cysteine 89.

Belongs to the low molecular weight phosphotyrosine protein phosphatase family. Thioredoxin-coupled ArsC subfamily.

The protein localises to the cytoplasm. The catalysed reaction is arsenate + [thioredoxin]-dithiol + H(+) = arsenite + [thioredoxin]-disulfide + H2O. Catalyzes the reduction of arsenate [As(V)] to arsenite [As(III)]. In Staphylococcus aureus (strain bovine RF122 / ET3-1), this protein is Arsenate reductase.